A 476-amino-acid chain; its full sequence is UDP-N-acetylmuramate--L-alanine ligase (476 aa).

126-132 contacts ATP; sequence GAHGKTT.

This sequence belongs to the MurCDEF family.

Its subcellular location is the cytoplasm. The catalysed reaction is UDP-N-acetyl-alpha-D-muramate + L-alanine + ATP = UDP-N-acetyl-alpha-D-muramoyl-L-alanine + ADP + phosphate + H(+). The protein operates within cell wall biogenesis; peptidoglycan biosynthesis. Its function is as follows. Cell wall formation. This is UDP-N-acetylmuramate--L-alanine ligase from Psychrobacter sp. (strain PRwf-1).